Here is a 529-residue protein sequence, read N- to C-terminus: Beta-galactoside alpha-2,6-sialyltransferase 2 (529 aa).

Residues 1 to 11 (MKPHLKQWRQR) lie on the Cytoplasmic side of the membrane. The chain crosses the membrane as a helical; Signal-anchor for type II membrane protein span at residues 12–32 (MLFGLFAGGLLFLLIFIYFTD). At 33–529 (SNPAEPVPSS…PAPSPVIPHS (497 aa)) the chain is on the lumenal side. Positions 142 to 186 (SHSQGTLGFPSPGEPGPREGAFPAAQVQRRRVKKRHRRQRRSHVL) are disordered. The segment covering 169-183 (QRRRVKKRHRRQRRS) has biased composition (basic residues). Asn-211 carries an N-linked (GlcNAc...) asparagine glycan. Cystine bridges form between Cys-253–Cys-519, Cys-296–Cys-448, and Cys-466–Cys-477.

It belongs to the glycosyltransferase 29 family.

It is found in the golgi apparatus. It localises to the golgi stack membrane. The enzyme catalyses a beta-D-galactoside + CMP-N-acetyl-beta-neuraminate = an N-acetyl-alpha-neuraminyl-(2-&gt;6)-beta-D-galactosyl derivative + CMP + H(+). Functionally, transfers sialic acid from the donor of substrate CMP-sialic acid to galactose containing acceptor substrates. Has alpha-2,6-sialyltransferase activity toward oligosaccharides that have the Gal-beta-1,4-GlcNAc sequence at the non-reducing end of their carbohydrate groups, but it has weak or no activities toward glycoproteins and glycolipids. This chain is Beta-galactoside alpha-2,6-sialyltransferase 2 (ST6GAL2), found in Pan troglodytes (Chimpanzee).